Consider the following 1113-residue polypeptide: Poly(A) RNA polymerase gld-2 (1113 aa).

Disordered stretches follow at residues 1-113 (MVMA…PKYH), 134-175 (RPIF…PTQP), 205-266 (LYRS…GQDP), and 445-513 (LDDE…DEST). A compositionally biased stretch (low complexity) spans 22-52 (SPSVDSVSRVQQQSGGFAFYNQQSNHQYQQS). The span at 60–106 (SRDGNTGYYNNHSGNKRQTYNNQRGGRSYNHRGNSNYQQNGEYSGNQ) shows a compositional bias: polar residues. Residues 149–172 (RRSSPPSPSALSSSTANSTSNRAP) show a composition bias toward low complexity. Residues 223–233 (YKQPPPQPPST) show a composition bias toward pro residues. The span at 451–485 (GADHDKTIDENRRRIHKSQEPRIGTEEKALNELPR) shows a compositional bias: basic and acidic residues. Positions 492 to 507 (SSCSSISSVSESSSPS) are enriched in low complexity. Positions 606 and 608 each coordinate Mg(2+). The region spanning 780-816 (TLGELLIGFLDYYANEFNYDRDAISIRQGRRVERAAL) is the PAP-associated domain. Disordered stretches follow at residues 817 to 854 (AVRP…GIPM) and 966 to 1113 (GPGH…NVSQ). Residues 972-994 (YQQQSNQNLSRPQRPGSNQGYQM) show a composition bias toward polar residues. Low complexity-rich tracts occupy residues 995–1035 (NNNR…SRSN) and 1044–1061 (QQNS…KENV). The segment covering 1069-1084 (VDKKQQNSNRKDDGNR) has biased composition (basic and acidic residues).

It belongs to the DNA polymerase type-B-like family. GLD2 subfamily. Interacts with gld-3. Requires Mg(2+) as cofactor. The cofactor is Mn(2+). Germline-specific.

It is found in the cytoplasm. It catalyses the reaction RNA(n) + ATP = RNA(n)-3'-adenine ribonucleotide + diphosphate. Its function is as follows. Cytoplasmic poly(A) RNA polymerase that adds successive AMP monomers to the 3'-end of specific RNAs, forming a poly(A) tail. Acts as a regulator of mitosis/meiosis required for progression through meiotic prophase during oogenesis and spermatogenesis and for promotion of the entry into meiosis from the mitotic cell cycle. May act by regulating and activating gld-1 mRNA activity in germline. Required for polyadenylation of neg-1 mRNA during embryogenesis. The polypeptide is Poly(A) RNA polymerase gld-2 (gld-2) (Caenorhabditis elegans).